Reading from the N-terminus, the 88-residue chain is Cytochrome c oxidase subunit 6B2 (88 aa).

In terms of domain architecture, CHCH spans 29 to 75 (TRNCYQNFLDYHRCIKTMNRRGKSTQPCEYYFRVYHSLCPISWVQRW). A Cx9C motif motif is present at residues 32-42 (CYQNFLDYHRC). 2 cysteine pairs are disulfide-bonded: C32-C67 and C42-C56. Positions 56–67 (CEYYFRVYHSLC) match the Cx10C motif motif.

It belongs to the cytochrome c oxidase subunit 6B family. As to quaternary structure, component of the cytochrome c oxidase (complex IV, CIV), a multisubunit enzyme composed of 14 subunits. The complex is composed of a catalytic core of 3 subunits MT-CO1, MT-CO2 and MT-CO3, encoded in the mitochondrial DNA, and 11 supernumerary subunits COX4I1 (or COX4I2), COX5A, COX5B, COX6A2 (or COX6A1), COX6B1 (or COX6B2), COX6C, COX7A1 (or COX7A2), COX7B, COX7C, COX8B and NDUFA4, which are encoded in the nuclear genome. The complex exists as a monomer or a dimer and forms supercomplexes (SCs) in the inner mitochondrial membrane with NADH-ubiquinone oxidoreductase (complex I, CI) and ubiquinol-cytochrome c oxidoreductase (cytochrome b-c1 complex, complex III, CIII), resulting in different assemblies (supercomplex SCI(1)III(2)IV(1) and megacomplex MCI(2)III(2)IV(2)). In terms of tissue distribution, testis specific.

It localises to the mitochondrion inner membrane. It participates in energy metabolism; oxidative phosphorylation. Functionally, component of the cytochrome c oxidase, the last enzyme in the mitochondrial electron transport chain which drives oxidative phosphorylation. The respiratory chain contains 3 multisubunit complexes succinate dehydrogenase (complex II, CII), ubiquinol-cytochrome c oxidoreductase (cytochrome b-c1 complex, complex III, CIII) and cytochrome c oxidase (complex IV, CIV), that cooperate to transfer electrons derived from NADH and succinate to molecular oxygen, creating an electrochemical gradient over the inner membrane that drives transmembrane transport and the ATP synthase. Cytochrome c oxidase is the component of the respiratory chain that catalyzes the reduction of oxygen to water. Electrons originating from reduced cytochrome c in the intermembrane space (IMS) are transferred via the dinuclear copper A center (CU(A)) of subunit 2 and heme A of subunit 1 to the active site in subunit 1, a binuclear center (BNC) formed by heme A3 and copper B (CU(B)). The BNC reduces molecular oxygen to 2 water molecules using 4 electrons from cytochrome c in the IMS and 4 protons from the mitochondrial matrix. The polypeptide is Cytochrome c oxidase subunit 6B2 (COX6B2) (Bos taurus (Bovine)).